The primary structure comprises 469 residues: Mitochondrial distribution and morphology protein 10 (469 aa).

The protein belongs to the MDM10 family. As to quaternary structure, component of the ER-mitochondria encounter structure (ERMES) or MDM complex, composed of MMM1, MDM10, MDM12 and MDM34. Associates with the mitochondrial outer membrane sorting assembly machinery SAM(core) complex.

The protein localises to the mitochondrion outer membrane. Functionally, component of the ERMES/MDM complex, which serves as a molecular tether to connect the endoplasmic reticulum and mitochondria. Components of this complex are involved in the control of mitochondrial shape and protein biogenesis and may function in phospholipid exchange. MDM10 is involved in the late assembly steps of the general translocase of the mitochondrial outer membrane (TOM complex). Functions in the TOM40-specific route of the assembly of outer membrane beta-barrel proteins, including the association of TOM40 with the receptor TOM22 and small TOM proteins. Can associate with the SAM(core) complex as well as the MDM12-MMM1 complex, both involved in late steps of the major beta-barrel assembly pathway, that is responsible for biogenesis of all outer membrane beta-barrel proteins. May act as a switch that shuttles between both complexes and channels precursor proteins into the TOM40-specific pathway. Plays a role in mitochondrial morphology and in the inheritance of mitochondria. In Scheffersomyces stipitis (strain ATCC 58785 / CBS 6054 / NBRC 10063 / NRRL Y-11545) (Yeast), this protein is Mitochondrial distribution and morphology protein 10.